The chain runs to 141 residues: Sporulation-specific cell division protein SsgB (141 aa).

It belongs to the SsgA family. As to quaternary structure, interacts with SsgA. Interacts with FtsZ (via N-terminus).

The protein localises to the cell septum. Involved in sporulation-specific cell division. Required for early stages of sporulation. Important in the process of growth cessation prior to sporulation-specific cell division. Recruits cell division protein FtsZ to the future septum sites and tethers the contractile ring structure (Z ring) to the cytoplasmic membrane during sporulation. Stimulates polymerization and filament length of FtsZ in vitro. This chain is Sporulation-specific cell division protein SsgB, found in Saccharopolyspora erythraea (strain ATCC 11635 / DSM 40517 / JCM 4748 / NBRC 13426 / NCIMB 8594 / NRRL 2338).